The primary structure comprises 97 residues: C-C motif chemokine 7 (97 aa).

Residues 1–23 (MQISAALLCVLLTAAAFTVHVWA) form the signal peptide. A Pyrrolidone carboxylic acid modification is found at Gln24. A glycan (N-linked (GlcNAc...) asparagine) is linked at Asn29. 2 cysteine pairs are disulfide-bonded: Cys33/Cys57 and Cys34/Cys73.

It belongs to the intercrine beta (chemokine CC) family. As to quaternary structure, monomer. Interacts with TNFAIP6 (via Link domain).

It is found in the secreted. Chemotactic factor that attracts monocytes and eosinophils, but not neutrophils. Augments monocyte anti-tumor activity. In Rattus norvegicus (Rat), this protein is C-C motif chemokine 7 (Ccl7).